The primary structure comprises 146 residues: Large ribosomal subunit protein uL23m (146 aa).

A disordered region spans residues 108-138 (PDLFPEKDPRSPEPLEEELPQQRQSSDLRCP). The span at 111 to 120 (FPEKDPRSPE) shows a compositional bias: basic and acidic residues.

Belongs to the universal ribosomal protein uL23 family. Component of the mitochondrial ribosome large subunit (39S) which comprises a 16S rRNA and about 50 distinct proteins.

It is found in the mitochondrion. The chain is Large ribosomal subunit protein uL23m (Mrpl23) from Mus musculus (Mouse).